The sequence spans 328 residues: D-cysteine desulfhydrase (328 aa).

N6-(pyridoxal phosphate)lysine is present on Lys-51.

It belongs to the ACC deaminase/D-cysteine desulfhydrase family. Homodimer. Pyridoxal 5'-phosphate is required as a cofactor.

It catalyses the reaction D-cysteine + H2O = hydrogen sulfide + pyruvate + NH4(+) + H(+). In terms of biological role, catalyzes the alpha,beta-elimination reaction of D-cysteine and of several D-cysteine derivatives. It could be a defense mechanism against D-cysteine. This chain is D-cysteine desulfhydrase, found in Klebsiella pneumoniae subsp. pneumoniae (strain ATCC 700721 / MGH 78578).